The sequence spans 307 residues: Acetyl-coenzyme A carboxylase carboxyl transferase subunit beta (307 aa).

A disordered region spans residues 1–21 (MAMADQRNDKPGRPAAQRERR). The 265-residue stretch at 43–307 (LWVKCPETGE…MGRERLSPAA (265 aa)) folds into the CoA carboxyltransferase N-terminal domain.

Belongs to the AccD/PCCB family. In terms of assembly, acetyl-CoA carboxylase is a heterohexamer composed of biotin carboxyl carrier protein (AccB), biotin carboxylase (AccC) and two subunits each of ACCase subunit alpha (AccA) and ACCase subunit beta (AccD).

Its subcellular location is the cytoplasm. It catalyses the reaction N(6)-carboxybiotinyl-L-lysyl-[protein] + acetyl-CoA = N(6)-biotinyl-L-lysyl-[protein] + malonyl-CoA. Its pathway is lipid metabolism; malonyl-CoA biosynthesis; malonyl-CoA from acetyl-CoA: step 1/1. Its function is as follows. Component of the acetyl coenzyme A carboxylase (ACC) complex. Biotin carboxylase (BC) catalyzes the carboxylation of biotin on its carrier protein (BCCP) and then the CO(2) group is transferred by the transcarboxylase to acetyl-CoA to form malonyl-CoA. In Phenylobacterium zucineum (strain HLK1), this protein is Acetyl-coenzyme A carboxylase carboxyl transferase subunit beta.